Here is a 592-residue protein sequence, read N- to C-terminus: Putative amidase ARB_02965 (592 aa).

A signal peptide spans 1–21 (MKGPITFLLQLGAVYTSIASA). Asn120 carries N-linked (GlcNAc...) asparagine glycosylation. Lys161 serves as the catalytic Charge relay system. The N-linked (GlcNAc...) asparagine glycan is linked to Asn217. Ser242 serves as the catalytic Charge relay system. Substrate is bound by residues Ser242 and 263-266 (TSGS). The active-site Acyl-ester intermediate is the Ser266. N-linked (GlcNAc...) asparagine glycosylation is found at Asn326, Asn430, and Asn528.

This sequence belongs to the amidase family.

The protein localises to the secreted. This chain is Putative amidase ARB_02965, found in Arthroderma benhamiae (strain ATCC MYA-4681 / CBS 112371) (Trichophyton mentagrophytes).